A 532-amino-acid chain; its full sequence is Glucose-6-phosphate isomerase (532 aa).

Catalysis depends on glutamate 322, which acts as the Proton donor. Catalysis depends on residues histidine 351 and lysine 457.

This sequence belongs to the GPI family.

It is found in the cytoplasm. The enzyme catalyses alpha-D-glucose 6-phosphate = beta-D-fructose 6-phosphate. It functions in the pathway carbohydrate biosynthesis; gluconeogenesis. Its pathway is carbohydrate degradation; glycolysis; D-glyceraldehyde 3-phosphate and glycerone phosphate from D-glucose: step 2/4. Catalyzes the reversible isomerization of glucose-6-phosphate to fructose-6-phosphate. This is Glucose-6-phosphate isomerase from Synechococcus sp. (strain JA-3-3Ab) (Cyanobacteria bacterium Yellowstone A-Prime).